Here is a 419-residue protein sequence, read N- to C-terminus: Ribosome biogenesis protein WDR12 homolog (419 aa).

A ubiquitin-like (UBL) domain region spans residues 10–91 (VQVHLKTKQE…EDAIDIEYVE (82 aa)). 7 WD repeats span residues 103–140 (LHDDWVSAVKACGKWILTGCYDNTINIWTNKGKHKLTI), 142–184 (GHTA…NAVE), 191–230 (GHERGVDSVCVSPDAQRFATGSWDTMLKIWSAGLDDTSEG), 249–287 (GHRESISAVQWMDATTLVTGSWDHTLKVWDLQLEGIKTE), 289–328 (STNKSIFDASYSKLNRLIVTASADKNLRLYDARTNQGSVV), 334–374 (GHNA…APLY), and 378–416 (GHGEKVLDIDWSNPKYIVSGGADNTVRVFKSGKATIENM).

Belongs to the WD repeat WDR12/YTM1 family.

The protein resides in the nucleus. Its subcellular location is the nucleolus. The protein localises to the nucleoplasm. Required for maturation of ribosomal RNAs and formation of the large ribosomal subunit. The polypeptide is Ribosome biogenesis protein WDR12 homolog (Drosophila virilis (Fruit fly)).